Reading from the N-terminus, the 232-residue chain is Orotidine 5'-phosphate decarboxylase (232 aa).

Substrate contacts are provided by residues Asp-13, Lys-35, 62 to 71, Thr-121, Arg-182, Gln-191, Gly-211, and Arg-212; that span reads DLKFHDIPNT. The active-site Proton donor is the Lys-64.

This sequence belongs to the OMP decarboxylase family. Type 1 subfamily. Homodimer.

It carries out the reaction orotidine 5'-phosphate + H(+) = UMP + CO2. The protein operates within pyrimidine metabolism; UMP biosynthesis via de novo pathway; UMP from orotate: step 2/2. Catalyzes the decarboxylation of orotidine 5'-monophosphate (OMP) to uridine 5'-monophosphate (UMP). The protein is Orotidine 5'-phosphate decarboxylase of Acinetobacter baumannii (strain AB0057).